Reading from the N-terminus, the 600-residue chain is Elongation factor 4 (600 aa).

Positions 4 to 186 constitute a tr-type G domain; sequence SKIRNFSIIA…EIVKKIPAPQ (183 aa). GTP contacts are provided by residues 16–21 and 133–136; these read DHGKST and NKID.

It belongs to the TRAFAC class translation factor GTPase superfamily. Classic translation factor GTPase family. LepA subfamily.

Its subcellular location is the cell inner membrane. The catalysed reaction is GTP + H2O = GDP + phosphate + H(+). Its function is as follows. Required for accurate and efficient protein synthesis under certain stress conditions. May act as a fidelity factor of the translation reaction, by catalyzing a one-codon backward translocation of tRNAs on improperly translocated ribosomes. Back-translocation proceeds from a post-translocation (POST) complex to a pre-translocation (PRE) complex, thus giving elongation factor G a second chance to translocate the tRNAs correctly. Binds to ribosomes in a GTP-dependent manner. In Trichlorobacter lovleyi (strain ATCC BAA-1151 / DSM 17278 / SZ) (Geobacter lovleyi), this protein is Elongation factor 4.